A 415-amino-acid polypeptide reads, in one-letter code: Multifunctional CCA protein (415 aa).

The ATP site is built by Gly-8 and Arg-11. Positions 8 and 11 each coordinate CTP. Residues Asp-21 and Asp-23 each coordinate Mg(2+). ATP-binding residues include Arg-91, Arg-143, and Arg-146. The CTP site is built by Arg-91, Arg-143, and Arg-146. The HD domain maps to Thr-232–Leu-333.

This sequence belongs to the tRNA nucleotidyltransferase/poly(A) polymerase family. Bacterial CCA-adding enzyme type 1 subfamily. Monomer. Can also form homodimers and oligomers. Requires Mg(2+) as cofactor. Ni(2+) is required as a cofactor.

The enzyme catalyses a tRNA precursor + 2 CTP + ATP = a tRNA with a 3' CCA end + 3 diphosphate. It carries out the reaction a tRNA with a 3' CCA end + 2 CTP + ATP = a tRNA with a 3' CCACCA end + 3 diphosphate. In terms of biological role, catalyzes the addition and repair of the essential 3'-terminal CCA sequence in tRNAs without using a nucleic acid template. Adds these three nucleotides in the order of C, C, and A to the tRNA nucleotide-73, using CTP and ATP as substrates and producing inorganic pyrophosphate. tRNA 3'-terminal CCA addition is required both for tRNA processing and repair. Also involved in tRNA surveillance by mediating tandem CCA addition to generate a CCACCA at the 3' terminus of unstable tRNAs. While stable tRNAs receive only 3'-terminal CCA, unstable tRNAs are marked with CCACCA and rapidly degraded. The chain is Multifunctional CCA protein from Cupriavidus taiwanensis (strain DSM 17343 / BCRC 17206 / CCUG 44338 / CIP 107171 / LMG 19424 / R1) (Ralstonia taiwanensis (strain LMG 19424)).